The primary structure comprises 894 residues: Microsomal triglyceride transfer protein large subunit (894 aa).

The first 18 residues, Met1–Ser18, serve as a signal peptide directing secretion. The 635-residue stretch at Leu28–Ile662 folds into the Vitellogenin domain. Cysteines 174 and 194 form a disulfide.

As to quaternary structure, heterodimer; heterodimerizes with the protein disulfide isomerase (P4HB/PDI). Interacts with APOB. Interacts with PRAP1.

The protein localises to the endoplasmic reticulum. The protein resides in the golgi apparatus. The catalysed reaction is a 1,2-diacyl-sn-glycero-3-phosphocholine(in) = a 1,2-diacyl-sn-glycero-3-phosphocholine(out). It catalyses the reaction a 1,2-diacyl-sn-glycero-3-phosphoethanolamine(in) = a 1,2-diacyl-sn-glycero-3-phosphoethanolamine(out). It carries out the reaction a cholesterol ester(in) = a cholesterol ester(out). The enzyme catalyses a triacyl-sn-glycerol(in) = a triacyl-sn-glycerol(out). Catalyzes the transport of triglyceride, cholesteryl ester, and phospholipid between phospholipid surfaces. Required for the assembly and secretion of plasma lipoproteins that contain apolipoprotein B. May be involved in regulating cholesteryl ester biosynthesis in cells that produce lipoproteins. This is Microsomal triglyceride transfer protein large subunit (MTTP) from Sus scrofa (Pig).